The primary structure comprises 380 residues: Cytochrome b (380 aa).

The next 4 helical transmembrane spans lie at 33–53 (FGSL…FLAM), 77–98 (WLIR…FIHV), 113–133 (WNIG…GYVL), and 178–198 (FFAF…VHLL). Residues His83 and His97 each contribute to the heme b site. Residues His182 and His196 each coordinate heme b. Position 201 (His201) interacts with a ubiquinone. 4 helical membrane passes run 226 to 246 (IKDL…VLFF), 288 to 308 (LGGV…PLLN), 320 to 340 (ITQA…WIGG), and 347 to 367 (FTLI…IFMP).

This sequence belongs to the cytochrome b family. The cytochrome bc1 complex contains 11 subunits: 3 respiratory subunits (MT-CYB, CYC1 and UQCRFS1), 2 core proteins (UQCRC1 and UQCRC2) and 6 low-molecular weight proteins (UQCRH/QCR6, UQCRB/QCR7, UQCRQ/QCR8, UQCR10/QCR9, UQCR11/QCR10 and a cleavage product of UQCRFS1). This cytochrome bc1 complex then forms a dimer. The cofactor is heme b.

The protein localises to the mitochondrion inner membrane. In terms of biological role, component of the ubiquinol-cytochrome c reductase complex (complex III or cytochrome b-c1 complex) that is part of the mitochondrial respiratory chain. The b-c1 complex mediates electron transfer from ubiquinol to cytochrome c. Contributes to the generation of a proton gradient across the mitochondrial membrane that is then used for ATP synthesis. The polypeptide is Cytochrome b (MT-CYB) (Rhipidomys wetzeli (Wetzel's climbing mouse)).